An 843-amino-acid chain; its full sequence is Phosphatidylinositol-glycan-specific phospholipase D (843 aa).

An N-terminal signal peptide occupies residues 1–23; that stretch reads MSVGRLWSGLLLLLLFFCSRSSS. Asn-94, Asn-271, Asn-292, Asn-308, and Asn-322 each carry an N-linked (GlcNAc...) asparagine glycan. FG-GAP repeat units follow at residues 368-429, 435-498, 500-560, 564-625, 635-695, 707-773, and 791-843; these read SPSA…GLPP, DKEA…GRLS, SPNI…RNDK, TLDE…SLGR, QREI…GATR, ALFS…TLGD, and QYVL…FSSD. Asn-483, Asn-502, Asn-592, Asn-605, and Asn-661 each carry an N-linked (GlcNAc...) asparagine glycan.

It belongs to the GPLD1 family. In terms of assembly, monomer. Glycosylated.

The protein localises to the secreted. The enzyme catalyses a 6-(alpha-D-glucosaminyl)-1-(1,2-diacyl-sn-glycero-3-phospho)-1D-myo-inositol + H2O = 6-(alpha-D-glucosaminyl)-1D-myo-inositol + a 1,2-diacyl-sn-glycero-3-phosphate + H(+). Its function is as follows. This protein hydrolyzes the inositol phosphate linkage in proteins anchored by phosphatidylinositol glycans (GPI-anchor) thus releasing these proteins from the membrane. This Rattus norvegicus (Rat) protein is Phosphatidylinositol-glycan-specific phospholipase D (Gpld1).